Here is a 176-residue protein sequence, read N- to C-terminus: Photosystem I assembly protein Ycf4 (176 aa).

2 helical membrane-spanning segments follow: residues Phe-22–Ser-42 and Val-57–Phe-77.

Belongs to the Ycf4 family.

It localises to the plastid thylakoid membrane. In terms of biological role, seems to be required for the assembly of the photosystem I complex. This is Photosystem I assembly protein Ycf4 from Cuscuta obtusiflora (Peruvian dodder).